The chain runs to 313 residues: Porphobilinogen deaminase (313 aa).

Residue C242 is modified to S-(dipyrrolylmethanemethyl)cysteine.

This sequence belongs to the HMBS family. Monomer. Dipyrromethane is required as a cofactor.

It catalyses the reaction 4 porphobilinogen + H2O = hydroxymethylbilane + 4 NH4(+). Its pathway is porphyrin-containing compound metabolism; protoporphyrin-IX biosynthesis; coproporphyrinogen-III from 5-aminolevulinate: step 2/4. In terms of biological role, tetrapolymerization of the monopyrrole PBG into the hydroxymethylbilane pre-uroporphyrinogen in several discrete steps. The sequence is that of Porphobilinogen deaminase from Pseudomonas entomophila (strain L48).